A 256-amino-acid polypeptide reads, in one-letter code: Trans-aconitate 2-methyltransferase (256 aa).

The protein belongs to the methyltransferase superfamily. Tam family.

It localises to the cytoplasm. The enzyme catalyses trans-aconitate + S-adenosyl-L-methionine = (E)-3-(methoxycarbonyl)pent-2-enedioate + S-adenosyl-L-homocysteine. Functionally, catalyzes the S-adenosylmethionine monomethyl esterification of trans-aconitate. This is Trans-aconitate 2-methyltransferase from Rhodopseudomonas palustris (strain BisA53).